The following is a 720-amino-acid chain: Serrate RNA effector molecule (720 aa).

Disordered stretches follow at residues M1–R192, L288–D335, and E361–G380. Over residues S33–P47 the composition is skewed to low complexity. Residues L48–S76 are compositionally biased toward basic and acidic residues. A phosphoserine mark is found at S76, S90, and S92. Basic residues predominate over residues D99 to Y115. Basic and acidic residues-rich tracts occupy residues R116–R126 and P136–H164. The segment covering L288 to P297 has biased composition (polar residues). Basic and acidic residues predominate over residues E368–H378. The C2H2-type zinc-finger motif lies at Y498–H523. Disordered regions lie at residues Y543–G622 and R666–L687. Residues P570–N607 show a composition bias toward basic and acidic residues. A compositionally biased stretch (gly residues) spans D608 to G622. S689 carries the post-translational modification Phosphoserine.

This sequence belongs to the ARS2 family. Interacts with HYL1. Interacts with RCF3, RS40 and RS41. Expressed in shoot meristems and in emerging organ primordia throughout development.

It is found in the nucleus. Its subcellular location is the nucleus speckle. Functionally, acts as a mediator between the cap-binding complex (CBC) and both the pre-mRNA splicing and primary microRNAs (miRNAs) processing machinery. Required for proper processing of primary miRNAs to miRNAs, thereby playing a role in RNA-mediated gene silencing (RNAi) by miRNAs. Does not participate in sense post-transcriptional gene silencing. Acts as a regulator of meristem activity and adaxial leaf fate via the miRNA gene-silencing pathway by regulating the expression of PHB and by limiting the competence of shoot tissue to respond to KNOX expression. Its function is however not limited to miRNA-mediated repression of leaf polarity genes, but rather acts as a general regulator of primary microRNAs processing. Also critical for the accumulation of the trans-acting small interfering RNA (ta-siRNA). Required for pre-mRNA splicing. The protein is Serrate RNA effector molecule (SE) of Arabidopsis thaliana (Mouse-ear cress).